The following is a 372-amino-acid chain: 4-hydroxy-3-methylbut-2-en-1-yl diphosphate synthase (flavodoxin) (372 aa).

Residues Cys-270, Cys-273, Cys-305, and Glu-312 each coordinate [4Fe-4S] cluster.

Belongs to the IspG family. It depends on [4Fe-4S] cluster as a cofactor.

It carries out the reaction (2E)-4-hydroxy-3-methylbut-2-enyl diphosphate + oxidized [flavodoxin] + H2O + 2 H(+) = 2-C-methyl-D-erythritol 2,4-cyclic diphosphate + reduced [flavodoxin]. Its pathway is isoprenoid biosynthesis; isopentenyl diphosphate biosynthesis via DXP pathway; isopentenyl diphosphate from 1-deoxy-D-xylulose 5-phosphate: step 5/6. Functionally, converts 2C-methyl-D-erythritol 2,4-cyclodiphosphate (ME-2,4cPP) into 1-hydroxy-2-methyl-2-(E)-butenyl 4-diphosphate. The polypeptide is 4-hydroxy-3-methylbut-2-en-1-yl diphosphate synthase (flavodoxin) (Salmonella typhi).